We begin with the raw amino-acid sequence, 244 residues long: Uridylate kinase (244 aa).

Position 17 to 20 (17 to 20) interacts with ATP; sequence KVSG. Residues 25–30 form an involved in allosteric activation by GTP region; sequence GEKGFG. G59 provides a ligand contact to UMP. Residues G60 and R64 each coordinate ATP. UMP is bound by residues D80 and 141-148; that span reads VGNPFFTT. Residues T168, Q169, Y174, and D177 each contribute to the ATP site.

The protein belongs to the UMP kinase family. Homohexamer.

The protein resides in the cytoplasm. It carries out the reaction UMP + ATP = UDP + ADP. The protein operates within pyrimidine metabolism; CTP biosynthesis via de novo pathway; UDP from UMP (UMPK route): step 1/1. Allosterically activated by GTP. Inhibited by UTP. In terms of biological role, catalyzes the reversible phosphorylation of UMP to UDP. The chain is Uridylate kinase from Ehrlichia canis (strain Jake).